A 491-amino-acid polypeptide reads, in one-letter code: Cytochrome P450 2F5 (491 aa).

Cysteine 436 is a heme binding site.

Belongs to the cytochrome P450 family. The cofactor is heme.

It localises to the endoplasmic reticulum membrane. Its subcellular location is the microsome membrane. The enzyme catalyses an organic molecule + reduced [NADPH--hemoprotein reductase] + O2 = an alcohol + oxidized [NADPH--hemoprotein reductase] + H2O + H(+). Functionally, cytochromes P450 are a group of heme-thiolate monooxygenases. In liver microsomes, this enzyme is involved in an NADPH-dependent electron transport pathway. It oxidizes a variety of structurally unrelated compounds, including steroids, fatty acids, and xenobiotics. In Gorilla gorilla gorilla (Western lowland gorilla), this protein is Cytochrome P450 2F5 (CYP2F5).